A 122-amino-acid polypeptide reads, in one-letter code: Large ribosomal subunit protein uL14 (122 aa).

The protein belongs to the universal ribosomal protein uL14 family. As to quaternary structure, part of the 50S ribosomal subunit. Forms a cluster with proteins L3 and L19. In the 70S ribosome, L14 and L19 interact and together make contacts with the 16S rRNA in bridges B5 and B8.

In terms of biological role, binds to 23S rRNA. Forms part of two intersubunit bridges in the 70S ribosome. In Campylobacter lari (strain RM2100 / D67 / ATCC BAA-1060), this protein is Large ribosomal subunit protein uL14.